The chain runs to 176 residues: Large ribosomal subunit protein uL10 (176 aa).

This sequence belongs to the universal ribosomal protein uL10 family. As to quaternary structure, part of the ribosomal stalk of the 50S ribosomal subunit. The N-terminus interacts with L11 and the large rRNA to form the base of the stalk. The C-terminus forms an elongated spine to which L12 dimers bind in a sequential fashion forming a multimeric L10(L12)X complex.

Functionally, forms part of the ribosomal stalk, playing a central role in the interaction of the ribosome with GTP-bound translation factors. The sequence is that of Large ribosomal subunit protein uL10 from Alcanivorax borkumensis (strain ATCC 700651 / DSM 11573 / NCIMB 13689 / SK2).